We begin with the raw amino-acid sequence, 369 residues long: GTPase Obg (369 aa).

One can recognise an Obg domain in the interval 1-159; sequence MKFIDEAKIE…RELRLELKVL (159 aa). Residues 128 to 148 form a disordered region; sequence IHFKSSTNRAPRQKSEGKEGE. Residues 160–333 enclose the OBG-type G domain; the sequence is ADIGLLGMPN…LVTEIYEYIA (174 aa). Residues 166–173, 191–195, 213–216, 283–286, and 314–316 each bind GTP; these read GMPNAGKS, FTTLH, DIPG, NKLD, and SAL. Serine 173 and threonine 193 together coordinate Mg(2+).

The protein belongs to the TRAFAC class OBG-HflX-like GTPase superfamily. OBG GTPase family. In terms of assembly, monomer. Requires Mg(2+) as cofactor.

Its subcellular location is the cytoplasm. An essential GTPase which binds GTP, GDP and possibly (p)ppGpp with moderate affinity, with high nucleotide exchange rates and a fairly low GTP hydrolysis rate. Plays a role in control of the cell cycle, stress response, ribosome biogenesis and in those bacteria that undergo differentiation, in morphogenesis control. In Janthinobacterium sp. (strain Marseille) (Minibacterium massiliensis), this protein is GTPase Obg.